Here is a 492-residue protein sequence, read N- to C-terminus: Serine/threonine-protein kinase 3 (492 aa).

The region spanning 26–277 (FDVLEKLGEG…ATQLLQHPFI (252 aa)) is the Protein kinase domain. Residues 32–40 (LGEGSYGSV) and K55 each bind ATP. D145 serves as the catalytic Proton acceptor. The residue at position 179 (T179) is a Phosphothreonine; by autocatalysis. Coiled-coil stretches lie at residues 286–328 (LRDL…TMVK) and 443–476 (NLDFEELQMRLTALDPMMEREIEELRQRYTAKRQ). Over residues 297-307 (KAKRQQEQQRE) the composition is skewed to basic and acidic residues. The segment at 297–339 (KAKRQQEQQRELEEDDENSEEEVEVDSHTMVKSGSESAGTMRA) is disordered. Over residues 308–320 (LEEDDENSEEEVE) the composition is skewed to acidic residues. Over residues 326-339 (MVKSGSESAGTMRA) the composition is skewed to polar residues. The SARAH domain occupies 438 to 485 (FDFLKNLDFEELQMRLTALDPMMEREIEELRQRYTAKRQPILDAMDAK).

This sequence belongs to the protein kinase superfamily. STE Ser/Thr protein kinase family. STE20 subfamily. As to quaternary structure, homodimer; mediated via the coiled-coil region. Mg(2+) serves as cofactor.

It localises to the cytoplasm. Its subcellular location is the nucleus. The catalysed reaction is L-seryl-[protein] + ATP = O-phospho-L-seryl-[protein] + ADP + H(+). It catalyses the reaction L-threonyl-[protein] + ATP = O-phospho-L-threonyl-[protein] + ADP + H(+). Its activity is regulated as follows. Inhibited by the C-terminal non-catalytic region. Activated by caspase-cleavage. Full activation also requires homodimerization and autophosphorylation of Thr-179. In terms of biological role, stress-activated, pro-apoptotic kinase which, following caspase-cleavage, enters the nucleus and induces chromatin condensation followed by internucleosomal DNA fragmentation. Key component of the Hippo signaling pathway which plays a pivotal role in organ size control and tumor suppression by restricting proliferation and promoting apoptosis. The core of this pathway is composed of a kinase cascade wherein stk3/mst2 and stk4/mst1, in complex with its regulatory protein sav1, phosphorylates and activates lats1/2 in complex with its regulatory protein mob1, which in turn phosphorylates and inactivates yap1 oncoprotein and wwtr1/taz. Phosphorylation of yap1 by lats2 inhibits its translocation into the nucleus to regulate cellular genes important for cell proliferation, cell death, and cell migration. The protein is Serine/threonine-protein kinase 3 (stk3) of Danio rerio (Zebrafish).